Here is a 589-residue protein sequence, read N- to C-terminus: Aspartate--tRNA ligase (589 aa).

L-aspartate is bound at residue glutamate 174. The aspartate stretch occupies residues 198-201; sequence QLFK. Arginine 220 is a binding site for L-aspartate. ATP-binding positions include 220–222 and glutamine 229; that span reads RDE. An L-aspartate-binding site is contributed by histidine 448. Glutamate 484 is a binding site for ATP. Arginine 491 is a binding site for L-aspartate. 536 to 539 serves as a coordination point for ATP; that stretch reads GLDR.

The protein belongs to the class-II aminoacyl-tRNA synthetase family. Type 1 subfamily. As to quaternary structure, homodimer.

It localises to the cytoplasm. The catalysed reaction is tRNA(Asp) + L-aspartate + ATP = L-aspartyl-tRNA(Asp) + AMP + diphosphate. Functionally, catalyzes the attachment of L-aspartate to tRNA(Asp) in a two-step reaction: L-aspartate is first activated by ATP to form Asp-AMP and then transferred to the acceptor end of tRNA(Asp). The protein is Aspartate--tRNA ligase of Leuconostoc citreum (strain KM20).